The sequence spans 458 residues: BTB/POZ domain-containing protein At5g41330 (458 aa).

In terms of domain architecture, BTB spans 11 to 72 (NVVSINVGGR…LRTGNLPARS (62 aa)). 3 WD repeats span residues 259-305 (DSAI…MVWE), 360-399 (LNER…LVGN), and 421-458 (SGEN…GISI).

It functions in the pathway protein modification; protein ubiquitination. Its function is as follows. May act as a substrate-specific adapter of an E3 ubiquitin-protein ligase complex (CUL3-RBX1-BTB) which mediates the ubiquitination and subsequent proteasomal degradation of target proteins. This is BTB/POZ domain-containing protein At5g41330 from Arabidopsis thaliana (Mouse-ear cress).